An 892-amino-acid chain; its full sequence is Alanine--tRNA ligase (892 aa).

H565, H569, C678, and H682 together coordinate Zn(2+). A disordered region spans residues 857–876 (GGKGGGGRPDMAQAGGPDGA).

Belongs to the class-II aminoacyl-tRNA synthetase family. The cofactor is Zn(2+).

The protein resides in the cytoplasm. The catalysed reaction is tRNA(Ala) + L-alanine + ATP = L-alanyl-tRNA(Ala) + AMP + diphosphate. In terms of biological role, catalyzes the attachment of alanine to tRNA(Ala) in a two-step reaction: alanine is first activated by ATP to form Ala-AMP and then transferred to the acceptor end of tRNA(Ala). Also edits incorrectly charged Ser-tRNA(Ala) and Gly-tRNA(Ala) via its editing domain. This chain is Alanine--tRNA ligase, found in Bradyrhizobium diazoefficiens (strain JCM 10833 / BCRC 13528 / IAM 13628 / NBRC 14792 / USDA 110).